The following is a 309-amino-acid chain: p-hydroxybenzoic acid efflux pump subunit AaeA (309 aa).

Residues A12 to Y32 form a helical membrane-spanning segment.

It belongs to the membrane fusion protein (MFP) (TC 8.A.1) family.

The protein localises to the cell inner membrane. Functionally, forms an efflux pump with AaeB. The polypeptide is p-hydroxybenzoic acid efflux pump subunit AaeA (Escherichia coli O157:H7).